Consider the following 813-residue polypeptide: G-type lectin S-receptor-like serine/threonine-protein kinase LECRK1 (813 aa).

The N-terminal stretch at 1-19 is a signal peptide; it reads MVALLLFPMLLQLLSPTCA. The Extracellular portion of the chain corresponds to 20 to 466; the sequence is QTQKNITLGS…NRKHWVLGSS (447 aa). One can recognise a Bulb-type lectin domain in the interval 22-149; it reads QKNITLGSTL…DGTTKWQTFD (128 aa). Residues N24, N57, N164, N168, N219, and N242 are each glycosylated (N-linked (GlcNAc...) asparagine). Residues 293–346 form the EGF-like; atypical domain; the sequence is PQNICHAIVSDVGSGVCGFNSYCTFDGTRNQIASCQCPPWYKFFDEQKKYKGCK. 5 disulfides stabilise this stretch: C297-C315, C309-C327, C329-C345, C391-C413, and C395-C401. The region spanning 354-433 is the PAN domain; it reads CDLDEATALA…NMADYVQRTV (80 aa). Residues N407 and N441 are each glycosylated (N-linked (GlcNAc...) asparagine). Residues 467 to 487 form a helical membrane-spanning segment; it reads LILGTSILVNFALISIFLFGT. The Cytoplasmic portion of the chain corresponds to 488–813; sequence YCRIATKKNI…DPCSFISSLP (326 aa). One can recognise a Protein kinase domain in the interval 523–797; it reads AGFHEILGAG…KVTQMLDGAV (275 aa). Residues 529–537 and K553 contribute to the ATP site; that span reads LGAGASGVV. The active-site Proton acceptor is D647.

This sequence belongs to the protein kinase superfamily. Ser/Thr protein kinase family.

It is found in the membrane. The catalysed reaction is L-seryl-[protein] + ATP = O-phospho-L-seryl-[protein] + ADP + H(+). The enzyme catalyses L-threonyl-[protein] + ATP = O-phospho-L-threonyl-[protein] + ADP + H(+). Functionally, involved in innate immunity. Required for the expression of defense-related genes PR1A, LOX2 and CHS1 upon biotic stresses. Required for basal resistance to the fungal blast (M.grisea), bacterial blight (X.oryzae pv. oryzae, Xoo) and the herbivorous insect brown planthopper (N.lugens, BPH). May be involved in several defense signaling pathways. Involved in the promotion of seed germination. Required for the expression of alpha-amylase genes during seed germination. Involved in resistance against the herbivorous insect brown planthopper (N.lugens, BPH). Member of the BPH3 (BPH resistance locus 3) cluster which contains LECRK1, LECRK2 and LECRK3. The sequence is that of G-type lectin S-receptor-like serine/threonine-protein kinase LECRK1 from Oryza sativa subsp. japonica (Rice).